The chain runs to 94 residues: Translation initiation factor 1A 2 (94 aa).

The S1-like domain occupies 6–80 (GRRNLRMPND…EKANVEWRYS (75 aa)).

It belongs to the eIF-1A family.

Functionally, seems to be required for maximal rate of protein biosynthesis. Enhances ribosome dissociation into subunits and stabilizes the binding of the initiator Met-tRNA(I) to 40 S ribosomal subunits. The chain is Translation initiation factor 1A 2 (eIF1A2) from Halobacterium salinarum (strain ATCC 700922 / JCM 11081 / NRC-1) (Halobacterium halobium).